A 260-amino-acid polypeptide reads, in one-letter code: MGQKIHPVGFRLGITQEHQSRWFAEPSRYPELLQEDHKLRQYIEQKLGRLAQNNAGISEVRIERKADQIDLEVRTARPGVVVGRGGQGIEALRTGLQTLLGGNRQIRINVVEVQRVDADAYLIAEFIAQQLERRVSFRRVVRQAIQRAQKAGIQGIKVQVSGRLNGAEIARTEWTREGRVPLHTLRADIDYSYCTAKTVYGILGIKVWVFKGEIIPGQEVAAPPPSTRDRDRDRGDRDREPRRRQQQRRRQQFEDRSNEG.

The KH type-2 domain occupies 39 to 114 (LRQYIEQKLG…QIRINVVEVQ (76 aa)). A disordered region spans residues 219–260 (EVAAPPPSTRDRDRDRGDRDREPRRRQQQRRRQQFEDRSNEG). Basic and acidic residues-rich tracts occupy residues 227 to 243 (TRDR…EPRR) and 251 to 260 (QQFEDRSNEG).

This sequence belongs to the universal ribosomal protein uS3 family. Part of the 30S ribosomal subunit. Forms a tight complex with proteins S10 and S14.

In terms of biological role, binds the lower part of the 30S subunit head. Binds mRNA in the 70S ribosome, positioning it for translation. This chain is Small ribosomal subunit protein uS3, found in Trichormus variabilis (strain ATCC 29413 / PCC 7937) (Anabaena variabilis).